The primary structure comprises 397 residues: Acetate kinase (397 aa).

Position 7 (asparagine 7) interacts with Mg(2+). Residue lysine 14 participates in ATP binding. A substrate-binding site is contributed by arginine 91. Residue aspartate 147 is the Proton donor/acceptor of the active site. ATP-binding positions include 207 to 211, 282 to 284, and 330 to 334; these read HLGNG, DFR, and GLGEN. Residue glutamate 383 participates in Mg(2+) binding.

This sequence belongs to the acetokinase family. Homodimer. The cofactor is Mg(2+). Requires Mn(2+) as cofactor.

It localises to the cytoplasm. The enzyme catalyses acetate + ATP = acetyl phosphate + ADP. The protein operates within metabolic intermediate biosynthesis; acetyl-CoA biosynthesis; acetyl-CoA from acetate: step 1/2. Catalyzes the formation of acetyl phosphate from acetate and ATP. Can also catalyze the reverse reaction. This chain is Acetate kinase, found in Moorella thermoacetica (strain ATCC 39073 / JCM 9320).